The sequence spans 344 residues: DNA-directed RNA polymerase subunit alpha (344 aa).

The interval 1 to 246 is alpha N-terminal domain (alpha-NTD); that stretch reads MPMERFLKDF…EFLFPLVDFE (246 aa). The interval 259–344 is alpha C-terminal domain (alpha-CTD); it reads ESSNLLDMSI…VLSKNVKISE (86 aa).

It belongs to the RNA polymerase alpha chain family. In terms of assembly, homodimer. The RNAP catalytic core consists of 2 alpha, 1 beta, 1 beta' and 1 omega subunit. When a sigma factor is associated with the core the holoenzyme is formed, which can initiate transcription.

The enzyme catalyses RNA(n) + a ribonucleoside 5'-triphosphate = RNA(n+1) + diphosphate. DNA-dependent RNA polymerase catalyzes the transcription of DNA into RNA using the four ribonucleoside triphosphates as substrates. In Borreliella afzelii (strain PKo) (Borrelia afzelii), this protein is DNA-directed RNA polymerase subunit alpha.